We begin with the raw amino-acid sequence, 209 residues long: FMN-dependent NADH:quinone oxidoreductase (209 aa).

FMN is bound by residues Ser-10, 16–18 (SHS), and 98–101 (MWNF).

This sequence belongs to the azoreductase type 1 family. Homodimer. FMN is required as a cofactor.

The catalysed reaction is 2 a quinone + NADH + H(+) = 2 a 1,4-benzosemiquinone + NAD(+). The enzyme catalyses N,N-dimethyl-1,4-phenylenediamine + anthranilate + 2 NAD(+) = 2-(4-dimethylaminophenyl)diazenylbenzoate + 2 NADH + 2 H(+). Functionally, quinone reductase that provides resistance to thiol-specific stress caused by electrophilic quinones. In terms of biological role, also exhibits azoreductase activity. Catalyzes the reductive cleavage of the azo bond in aromatic azo compounds to the corresponding amines. The sequence is that of FMN-dependent NADH:quinone oxidoreductase from Nitratidesulfovibrio vulgaris (strain ATCC 29579 / DSM 644 / CCUG 34227 / NCIMB 8303 / VKM B-1760 / Hildenborough) (Desulfovibrio vulgaris).